The chain runs to 203 residues: Thymidylate kinase (203 aa).

7–14 contacts ATP; that stretch reads GGEGAGKT.

The protein belongs to the thymidylate kinase family.

The enzyme catalyses dTMP + ATP = dTDP + ADP. In terms of biological role, phosphorylation of dTMP to form dTDP in both de novo and salvage pathways of dTTP synthesis. In Chlamydia trachomatis serovar D (strain ATCC VR-885 / DSM 19411 / UW-3/Cx), this protein is Thymidylate kinase (tmk).